The sequence spans 596 residues: ATP-dependent lipid A-core flippase (596 aa).

6 consecutive transmembrane segments (helical) span residues Val34 to Ile54, Ala80 to Leu100, Ala138 to Val158, Val164 to Ile184, Gln263 to Val283, and Val292 to Leu312. The ABC transmembrane type-1 domain maps to Val38 to Arg321. In terms of domain architecture, ABC transporter spans Ile353–Ile589. Gly389–Thr396 lines the ATP pocket.

The protein belongs to the ABC transporter superfamily. Lipid exporter (TC 3.A.1.106) family. In terms of assembly, homodimer.

The protein localises to the cell inner membrane. It carries out the reaction ATP + H2O + lipid A-core oligosaccharideSide 1 = ADP + phosphate + lipid A-core oligosaccharideSide 2.. Involved in lipopolysaccharide (LPS) biosynthesis. Translocates lipid A-core from the inner to the outer leaflet of the inner membrane. Transmembrane domains (TMD) form a pore in the inner membrane and the ATP-binding domain (NBD) is responsible for energy generation. This chain is ATP-dependent lipid A-core flippase, found in Burkholderia thailandensis (strain ATCC 700388 / DSM 13276 / CCUG 48851 / CIP 106301 / E264).